We begin with the raw amino-acid sequence, 177 residues long: GTP-dependent dephospho-CoA kinase (177 aa).

D45, V46, V47, D64, and E120 together coordinate GTP.

It belongs to the GTP-dependent DPCK family.

The catalysed reaction is 3'-dephospho-CoA + GTP = GDP + CoA + H(+). It functions in the pathway cofactor biosynthesis; coenzyme A biosynthesis. Functionally, catalyzes the GTP-dependent phosphorylation of the 3'-hydroxyl group of dephosphocoenzyme A to form coenzyme A (CoA). The polypeptide is GTP-dependent dephospho-CoA kinase (Halobacterium salinarum (strain ATCC 29341 / DSM 671 / R1)).